We begin with the raw amino-acid sequence, 194 residues long: Early growth response protein 1 (194 aa).

C2H2-type zinc fingers lie at residues C1–H18, F24–H46, and F52–H74.

It belongs to the EGR C2H2-type zinc-finger protein family.

It is found in the nucleus. Its subcellular location is the cytoplasm. Its function is as follows. Transcriptional regulator. Recognizes and binds to the DNA sequence 5'-GCG(T/G)GGGCG-3'(EGR-site) in the promoter region of target genes. Binds double-stranded target DNA, irrespective of the cytosine methylation status. Regulates the transcription of numerous target genes, and thereby plays an important role in regulating the response to growth factors, DNA damage, and ischemia. Plays a role in the regulation of cell survival, proliferation and cell death. Mediates responses to ischemia and hypoxia; regulates the expression of proteins that are involved in inflammatory processes. Plays a role in regulating the expression of circadian clock genes. This is Early growth response protein 1 (EGR1) from Gallus gallus (Chicken).